The chain runs to 403 residues: LIM/homeobox protein Lhx1 (403 aa).

2 LIM zinc-binding domains span residues 4 to 54 (CAGC…CKND) and 63 to 117 (CAGC…CKED). Positions 131–147 (ISVTGSDPSLSPESQDP) are enriched in polar residues. Disordered stretches follow at residues 131–185 (ISVT…PRTT) and 318–366 (PAGT…SMHS). Over residues 150 to 166 (DDAKDSESANVSDKEAG) the composition is skewed to basic and acidic residues. Residues 179–238 (RRGPRTTIKAKQLETLKAAFAATPKPTRHIREQLAQETGLNMRVIQVWFQNRRSKERRMK) constitute a DNA-binding region (homeobox).

As to quaternary structure, interacts with ldb1 via the tandem LIM domains. Both LIM domains are required for optimal binding and binding relieves the inhibitory effect of the LIM domains and activates lhx1. Binding to ldb1 also prevents degradation of ldb1 by rnf12. The stoichiometry of lhx1 and ldb1 is important for their function and an excess of ldb1 can inhibit lhx1 function. Interacts with the N-terminal region of rnf12 by a homeobox-dependent mechanism. As to expression, exhibits a biphasic expression pattern. Initially localized to the Spemann organizer region of gastrulae, leading to expression in prechordal mesoderm and notochord. In the second phase, expressed in the lateral mesoderm and neural plate, eventually concentrating in the pronephros and the CNS. Expressed in the pronephros primordium by late gastrula (stage 12.5) and becomes restricted to the tips of the tubules and ducts as kidney development progresses. In the CNS, becomes progressively recognizable in anatomically distinct structures during larval development. Within the forebrain, shows almost identical expression to lhx5 in the diencephalon, being expressed in alternating stripes to lhx2 and lhx9. Expressed in the diencephalic pretectum within prosomere 1, hypothalamus, ventral thalamus and zona limitans intrathalamica. In the telencephalon, the expression pattern is distinct from lhx5, being localized in the pallium and subpallium. Also expressed in the ventral territories of midbrain (mesencephalon) and hindbrain (rhombencephalon), being expressed in the mesencephalic tegmentum and hindbrain reticular formation. Also shows intense expression in the cerebellum including Purkinje cells.

The protein localises to the nucleus. Functionally, involved in the establishment of the body plan via the Spemann organizer during gastrulation. Transcriptional activator required to induce organizer gene expression downstream of siamois. Promotes head formation by binding to 5'-TAAT'-3' elements in the promoters of head organizer genes cer1 and gsc to stimulate expression. Binds as a complex with siamois and mix-A/mix.1 to the cer1 promoter, and with ldb1 and otx2 to the gsc promoter. Also involved in neural induction via the organizer, including a role in notochord formation. Acts synergistically with ldb1 and ssbp in subsequent axis formation. Involved in kidney development, acting synergistically with pax8 to establish the pronephric primordium in late gastrulae/early neurulae and with pax2 during pronephric morphogenesis in tailbud stages. Has a later role in mediating the activity of inhibitors of ventralization. This chain is LIM/homeobox protein Lhx1 (lhx1), found in Xenopus laevis (African clawed frog).